Reading from the N-terminus, the 61-residue chain is Temporin-1Tb (61 aa).

The signal sequence occupies residues 1 to 22 (MFTLKKSLLLLFFLGTINLSLC). Residues 23 to 44 (EEERNAEEERRDEPDERDVQVE) constitute a propeptide that is removed on maturation. Leu59 bears the Leucine amide mark.

Belongs to the frog skin active peptide (FSAP) family. Temporin subfamily. As to quaternary structure, homo-oligomerizes in membranes as homodimers, homotrimers, or even homotetramers. Oligomerizes in presence of LPS. In Gram-positive bacterial mimetic membranes, the aggregation is weakly pronounced, and penetration proceeds more rapidly and is deeper than in Gram-negative bacterial mimetic membranes where aggregation is high. Homo-oligomerization is prevented by temporin-L. As to expression, expressed by the skin glands.

It is found in the secreted. The protein resides in the target cell membrane. It localises to the target cell. The protein localises to the target cell cytoplasm. Amphipathic alpha-helical antimicrobial peptide with potent activity against Gram-positive bacteria, weak activity against Gram-negative bacteria, and moderate activity against fungi. Mainly acts by causing membrane permeabilization, but is unable to forme pore-like openings. Is also able to penetrate eukaryotic cells (keratinocytes), and kill intracellular S.aureus (both wild-type and MRSA) without injuring host cells. Shows inhibitory effect on biofilm formation of Gram-positive bacteria, but not of Gram-negative bacteria. Shows antiviral activity against herpes simplex virus 1 (HSV-1) by disrupting the viral envelope. Also displays anti-leishmania activity by damaging parasite membrane. Does not show hemolytic activity. Acts synergistically with temporin-L that improves temporin-1Tb activity by preventing its self-association in lipopolysaccharides (LPS). In vitro, promotes cell migration and wound healing. This is Temporin-1Tb from Rana temporaria (European common frog).